The following is a 117-amino-acid chain: Immunoglobulin heavy variable 3-21 (117 aa).

The N-terminal stretch at 1–19 is a signal peptide; that stretch reads MELGLRWVFLVAILEGVQC. The interval 20-44 is framework-1; the sequence is EVQLVESGGGLVKPGGSLRLSCAAS. An Ig-like domain is found at 20-117; sequence EVQLVESGGG…EDTAVYYCAR (98 aa). Cysteines 41 and 115 form a disulfide. Residues 45–52 are complementarity-determining-1; the sequence is GFTFSSYS. The framework-2 stretch occupies residues 53–69; the sequence is MNWVRQAPGKGLEWVSS. The tract at residues 70 to 77 is complementarity-determining-2; it reads ISSSSSYI. The tract at residues 78–115 is framework-3; the sequence is YYADSVKGRFTISRDNAKNSLYLQMNSLRAEDTAVYYC. The complementarity-determining-3 stretch occupies residues 116–117; it reads AR.

In terms of assembly, immunoglobulins are composed of two identical heavy chains and two identical light chains; disulfide-linked.

The protein localises to the secreted. The protein resides in the cell membrane. Its function is as follows. V region of the variable domain of immunoglobulin heavy chains that participates in the antigen recognition. Immunoglobulins, also known as antibodies, are membrane-bound or secreted glycoproteins produced by B lymphocytes. In the recognition phase of humoral immunity, the membrane-bound immunoglobulins serve as receptors which, upon binding of a specific antigen, trigger the clonal expansion and differentiation of B lymphocytes into immunoglobulins-secreting plasma cells. Secreted immunoglobulins mediate the effector phase of humoral immunity, which results in the elimination of bound antigens. The antigen binding site is formed by the variable domain of one heavy chain, together with that of its associated light chain. Thus, each immunoglobulin has two antigen binding sites with remarkable affinity for a particular antigen. The variable domains are assembled by a process called V-(D)-J rearrangement and can then be subjected to somatic hypermutations which, after exposure to antigen and selection, allow affinity maturation for a particular antigen. This is Immunoglobulin heavy variable 3-21 from Homo sapiens (Human).